Consider the following 217-residue polypeptide: Translation initiation factor 6 (217 aa).

This sequence belongs to the eIF-6 family.

Functionally, binds to the 50S ribosomal subunit and prevents its association with the 30S ribosomal subunit to form the 70S initiation complex. The sequence is that of Translation initiation factor 6 from Picrophilus torridus (strain ATCC 700027 / DSM 9790 / JCM 10055 / NBRC 100828 / KAW 2/3).